A 232-amino-acid polypeptide reads, in one-letter code: Homeobox protein SAX-1 (232 aa).

3 disordered regions span residues 1-64 (CLPD…SCAK), 122-150 (KQHP…RPAA), and 185-208 (LLGA…LCPS). Positions 65 to 124 (PRRARTAFTYEQLVALENKFRATRYLSVCERLNLALSLSLTETQVKIWFQNRRTKWKKQH) form a DNA-binding region, homeobox. Low complexity predominate over residues 126–142 (GADGAAAPAPPAAARCS).

This sequence belongs to the NK-1 homeobox family. As to expression, transiently expressed in the birth zone of the whole spinal cord regardless of the axial level.

It localises to the nucleus. The polypeptide is Homeobox protein SAX-1 (SAX1) (Gallus gallus (Chicken)).